A 544-amino-acid polypeptide reads, in one-letter code: Chaperonin GroEL (544 aa).

ATP contacts are provided by residues 30 to 33 (TLGP), Lys-51, 87 to 91 (DGTTT), Gly-415, 479 to 481 (NAA), and Asp-495.

This sequence belongs to the chaperonin (HSP60) family. Forms a cylinder of 14 subunits composed of two heptameric rings stacked back-to-back. Interacts with the co-chaperonin GroES.

It localises to the cytoplasm. It carries out the reaction ATP + H2O + a folded polypeptide = ADP + phosphate + an unfolded polypeptide.. Functionally, together with its co-chaperonin GroES, plays an essential role in assisting protein folding. The GroEL-GroES system forms a nano-cage that allows encapsulation of the non-native substrate proteins and provides a physical environment optimized to promote and accelerate protein folding. The protein is Chaperonin GroEL of Francisella tularensis subsp. novicida (strain U112).